The following is a 390-amino-acid chain: Probable L-tyrosine/L-aspartate decarboxylase (390 aa).

N6-(pyridoxal phosphate)lysine is present on Lys-239.

This sequence belongs to the group II decarboxylase family. MfnA subfamily. Pyridoxal 5'-phosphate is required as a cofactor.

The catalysed reaction is L-tyrosine + H(+) = tyramine + CO2. The enzyme catalyses L-aspartate + H(+) = beta-alanine + CO2. It participates in cofactor biosynthesis; methanofuran biosynthesis. Its pathway is cofactor biosynthesis; coenzyme A biosynthesis. Functionally, catalyzes the decarboxylation of L-tyrosine to produce tyramine for methanofuran biosynthesis. Can also catalyze the decarboxylation of L-aspartate to produce beta-alanine for coenzyme A (CoA) biosynthesis. The chain is Probable L-tyrosine/L-aspartate decarboxylase from Methanococcus aeolicus (strain ATCC BAA-1280 / DSM 17508 / OCM 812 / Nankai-3).